Reading from the N-terminus, the 331-residue chain is Thiamine thiazole synthase (331 aa).

Substrate is bound by residues serine 82, 103–104 (EA), glycine 111, and valine 176. At cysteine 210 the chain carries 2,3-didehydroalanine (Cys). Substrate-binding positions include aspartate 212, histidine 242, methionine 296, and 306–308 (RMG).

The protein belongs to the THI4 family. In terms of assembly, homooctamer. Requires Fe cation as cofactor. During the catalytic reaction, a sulfide is transferred from Cys-210 to a reaction intermediate, generating a dehydroalanine residue.

The protein resides in the cytoplasm. It localises to the nucleus. It carries out the reaction [ADP-thiazole synthase]-L-cysteine + glycine + NAD(+) = [ADP-thiazole synthase]-dehydroalanine + ADP-5-ethyl-4-methylthiazole-2-carboxylate + nicotinamide + 3 H2O + 2 H(+). Involved in biosynthesis of the thiamine precursor thiazole. Catalyzes the conversion of NAD and glycine to adenosine diphosphate 5-(2-hydroxyethyl)-4-methylthiazole-2-carboxylic acid (ADT), an adenylated thiazole intermediate. The reaction includes an iron-dependent sulfide transfer from a conserved cysteine residue of the protein to a thiazole intermediate. The enzyme can only undergo a single turnover, which suggests it is a suicide enzyme. May have additional roles in adaptation to various stress conditions and in DNA damage tolerance. The sequence is that of Thiamine thiazole synthase from Eremothecium gossypii (strain ATCC 10895 / CBS 109.51 / FGSC 9923 / NRRL Y-1056) (Yeast).